A 532-amino-acid chain; its full sequence is Cytokinin dehydrogenase 1 (532 aa).

The signal sequence occupies residues Met1–Ala17. 2 N-linked (GlcNAc...) asparagine glycosylation sites follow: Asn52 and Asn63. In terms of domain architecture, FAD-binding PCMH-type spans Thr65–Ala244. Phe100, Gly102, Arg103, and Gly104 together coordinate FAD. His105 carries the post-translational modification Pros-8alpha-FAD histidine. Ser106 and Gln110 together coordinate FAD. Residue Asn133 is glycosylated (N-linked (GlcNAc...) asparagine). 5 residues coordinate FAD: Asp168, Thr173, Ser179, Val183, and Ile234. 2 N-linked (GlcNAc...) asparagine glycosylation sites follow: Asn321 and Asn432. The FAD site is built by Tyr490, Ser525, and Gln528.

This sequence belongs to the oxygen-dependent FAD-linked oxidoreductase family. As to quaternary structure, monomer. Requires FAD as cofactor.

The protein resides in the secreted. Its subcellular location is the extracellular space. It carries out the reaction N(6)-dimethylallyladenine + A + H2O = 3-methyl-2-butenal + adenine + AH2. Its function is as follows. Catalyzes the oxidation of cytokinins, a family of N(6)-substituted adenine derivatives that are plant hormones, where the substituent is an isopentenyl group. The sequence is that of Cytokinin dehydrogenase 1 (CKX1) from Oryza sativa subsp. japonica (Rice).